A 318-amino-acid polypeptide reads, in one-letter code: Ribose-phosphate pyrophosphokinase (318 aa).

ATP contacts are provided by residues 43 to 45 and 102 to 103; these read DGE and RQ. Mg(2+) is bound by residues H136 and D176. K199 is a catalytic residue. Residues R201, D225, and 229-233 each bind D-ribose 5-phosphate; that span reads DTAGT.

Belongs to the ribose-phosphate pyrophosphokinase family. Class I subfamily. As to quaternary structure, homohexamer. It depends on Mg(2+) as a cofactor.

The protein resides in the cytoplasm. It carries out the reaction D-ribose 5-phosphate + ATP = 5-phospho-alpha-D-ribose 1-diphosphate + AMP + H(+). It functions in the pathway metabolic intermediate biosynthesis; 5-phospho-alpha-D-ribose 1-diphosphate biosynthesis; 5-phospho-alpha-D-ribose 1-diphosphate from D-ribose 5-phosphate (route I): step 1/1. Its function is as follows. Involved in the biosynthesis of the central metabolite phospho-alpha-D-ribosyl-1-pyrophosphate (PRPP) via the transfer of pyrophosphoryl group from ATP to 1-hydroxyl of ribose-5-phosphate (Rib-5-P). In Listeria ivanovii, this protein is Ribose-phosphate pyrophosphokinase.